The primary structure comprises 302 residues: Phosphatidylglycerol--prolipoprotein diacylglyceryl transferase (302 aa).

The next 7 helical transmembrane spans lie at 19-39 (FGPL…LLGW), 67-87 (LVLW…FVFY), 108-128 (IWEG…AIIL), 143-163 (LIAP…FING), 203-223 (QLYE…FAIY), 232-252 (GALV…LENV), and 264-284 (LGLT…GWLL). Residue arginine 156 coordinates a 1,2-diacyl-sn-glycero-3-phospho-(1'-sn-glycerol).

It belongs to the Lgt family.

Its subcellular location is the cell inner membrane. The catalysed reaction is L-cysteinyl-[prolipoprotein] + a 1,2-diacyl-sn-glycero-3-phospho-(1'-sn-glycerol) = an S-1,2-diacyl-sn-glyceryl-L-cysteinyl-[prolipoprotein] + sn-glycerol 1-phosphate + H(+). It participates in protein modification; lipoprotein biosynthesis (diacylglyceryl transfer). Functionally, catalyzes the transfer of the diacylglyceryl group from phosphatidylglycerol to the sulfhydryl group of the N-terminal cysteine of a prolipoprotein, the first step in the formation of mature lipoproteins. The protein is Phosphatidylglycerol--prolipoprotein diacylglyceryl transferase of Caulobacter vibrioides (strain ATCC 19089 / CIP 103742 / CB 15) (Caulobacter crescentus).